The sequence spans 375 residues: Secreted LysM effector Vd4LysM (375 aa).

The N-terminal stretch at 1 to 24 (MPSVTISSTMLAGLLLMLVPASSA) is a signal peptide. The 48-residue stretch at 57–104 (SWWWDNEGQIPCANMPAEWGITMQDFLRWNPSITSSCGNFLNGRSYCV) folds into the LysM 1 domain. The segment at 108–139 (GEEPPVPGTPTTTTAPATTTKPSNGITTPQPI) is disordered. Residues 116-129 (TPTTTTAPATTTKP) are compositionally biased toward low complexity. The LysM 2 domain maps to 149-195 (KFHYISEGDRCQDILSYQKITLADFFKWNPAVKSDCSGLWSKTNACV). A compositionally biased stretch (low complexity) spans 206-217 (TTTTKPATPTTP). Positions 206 to 225 (TTTTKPATPTTPSNGITTPQ) are disordered. The LysM 3 domain maps to 237 to 283 (KFHYISEGDRCQDILSYQKITQADFFKWNPAVKSDCSGLWSKTHACV). The interval 287 to 317 (GGQAPPPTPTTTKPTTTKPPGNGVTTPTPTQ) is disordered. Positions 296–317 (TTTKPTTTKPPGNGVTTPTPTQ) are enriched in low complexity. One can recognise a LysM 4 domain in the interval 326–372 (KFHFVSPGNTCQQIVSYQKITMANFVKWNSGAGSGCNNLWGNTHACV).

It belongs to the secreted LysM effector family.

Its function is as follows. Might have a role in sequestration of chitin oligosaccharides (breakdown products of fungal cell walls that are released during invasion and act as triggers of host immunity) to dampen host defense. Does not play an important role during host colonization. The polypeptide is Secreted LysM effector Vd4LysM (Verticillium dahliae (strain VdLs.17 / ATCC MYA-4575 / FGSC 10137) (Verticillium wilt)).